Consider the following 680-residue polypeptide: WD repeat-containing protein 48 homolog (680 aa).

8 WD repeats span residues 26 to 65, 71 to 110, 113 to 152, 164 to 203, 206 to 245, 248 to 287, 290 to 329, and 350 to 389; these read QHRN…SEKY, HHND…CMST, THRD…ALTA, GSKD…RSMK, GHTE…CVQT, VHKE…NKTL, EEQA…RCTM, and KGGA…KKEQ. A disordered region spans residues 592 to 616; that stretch reads ETTPSGGNANNSLQNSQSDANSEGS.

It belongs to the WD repeat WDR48 family. Catalytic component of the Usp12-46 deubiquitylase complex consisting of Usp12-46, Wdr20 and Uaf1; regulatory subunit that, together wtih Wdr20, stabilizes Usp12-46. The Usp12-46 deubiquitylase complex associates with arr/arrow; the interaction leads to deubiquitination and stabilization of arr/arrow.

Functionally, regulatory component of the Usp12-46 deubiquitylase complex. activates deubiquitination by increasing the catalytic turnover without increasing the affinity of deubiquitinating enzymes for the substrate. The complex deubiquitylates the wg/wingless-signaling receptor arr/arrow, which stabilizes the receptor and increases its concentration at the cell surface; this enhances the sensitivity of cells to wg/wingless-signal stimulation. This increases the amplitude and spatial range of the signaling response to the wg/wingless morphogen gradient, facilitating the precise concentration-dependent regulation of its target genes. Together with Wdr20 and Usp12-46 required for wg/wingless-mediated signaling in the wing imaginal disc and for wg/wingless-dependent regulation of intestinal stem cell proliferation. The chain is WD repeat-containing protein 48 homolog from Drosophila erecta (Fruit fly).